Here is a 606-residue protein sequence, read N- to C-terminus: Ubiquitin carboxyl-terminal hydrolase 2 (606 aa).

Residues 1–201 (MSQLSSTLKR…RSEYLADYLE (201 aa)) form a necessary for interaction with MDM4 region. Disordered regions lie at residues 53-112 (PSPP…GGSG) and 207-228 (ASAP…LSPT). Residues 90-100 (KRAESQTRGTE) are compositionally biased toward basic and acidic residues. In terms of domain architecture, USP spans 268–600 (AGLRNLGNTC…DAYLLFYELA (333 aa)). The active-site Nucleophile is the Cys277. The interval 404–504 (YLEREDSRIG…FPKILVLHLK (101 aa)) is necessary for interaction with MDM4. Zn(2+)-binding residues include Cys426, Cys429, Cys477, and Cys480. Catalysis depends on His558, which acts as the Proton acceptor.

Belongs to the peptidase C19 family. USP2 subfamily. Homooligomer. Found in trimeric complex with MDM2 and MDM4 and USP2. Interacts with CCND1; the interaction is direct and promotes its stabilization by antagonizing ubiquitin-dependent degradation. Interacts (via N-terminus and C-terminus) with MDM2. Interacts with MDM4 and PER1. Interacts with KCNQ1; counteracts the NEDD4L-specific down-regulation of I(Ks) and restores plasma membrane localization of KCNQ1.

The protein localises to the cytoplasm. The protein resides in the perinuclear region. It carries out the reaction Thiol-dependent hydrolysis of ester, thioester, amide, peptide and isopeptide bonds formed by the C-terminal Gly of ubiquitin (a 76-residue protein attached to proteins as an intracellular targeting signal).. Cleavage is inhibited by ubiquitin in a dosage-dependent manner. Cleavage is blocked by ubiquitin aldehyde. In terms of biological role, hydrolase that deubiquitinates polyubiquitinated target proteins such as MDM2, MDM4 and CCND1. Possesses both ubiquitin-specific peptidase and isopeptidase activities. Deubiquitinates MDM2 without reversing MDM2-mediated p53/TP53 ubiquitination and thus indirectly promotes p53/TP53 degradation and limits p53 activity. Has no deubiquitinase activity against p53/TP53. Prevents MDM2-mediated degradation of MDM4. Plays a role in the G1/S cell-cycle progression in normal and cancer cells. Plays a role in the regulation of myogenic differentiation of embryonic muscle cells. Regulates the circadian clock by modulating its intrinsic circadian rhythm and its capacity to respond to external cues. Associates with clock proteins and deubiquitinates core clock component PER1 but does not affect its overall stability. Regulates the nucleocytoplasmic shuttling and nuclear retention of PER1 and its repressive role on the clock transcription factors CLOCK and BMAL1. This is Ubiquitin carboxyl-terminal hydrolase 2 (USP2) from Bos taurus (Bovine).